The following is a 352-amino-acid chain: Cysteinyl leukotriene receptor 1 (352 aa).

Topologically, residues 1–43 are extracellular; it reads MYLQGTKQTFLENMNGTENLTTSLINNTCHDTIDEFRNQVYST. N-linked (GlcNAc...) asparagine glycans are attached at residues N15, N19, and N26. The helical transmembrane segment at 44 to 64 threads the bilayer; that stretch reads MYSVISVVGFFGNSFVLYVLI. Over 65–72 the chain is Cytoplasmic; sequence KTYHEKSA. Residues 73 to 93 form a helical membrane-spanning segment; that stretch reads FQVYMINLAIADLLCVCTLPL. Residues 94–121 are Extracellular-facing; sequence RVVYYVHKGKWLFGDFLCRLTTYALYVN. C111 and C188 are joined by a disulfide. Residues 122 to 142 traverse the membrane as a helical segment; that stretch reads LYCSIFFMTAMSFFRCVAIVF. Residues 143–156 lie on the Cytoplasmic side of the membrane; that stretch reads PVQNINLVTQKKAR. A helical membrane pass occupies residues 157–177; sequence FVCIGIWIFVILTSSPFLMYK. The Extracellular portion of the chain corresponds to 178–208; that stretch reads SYQDEKNNTKCFEPPQNNQAKKYVLILHYVS. An N-linked (GlcNAc...) asparagine glycan is attached at N184. The chain crosses the membrane as a helical span at residues 209–229; the sequence is LFFGFIIPFVTIIVCYTMIIL. Over 230 to 245 the chain is Cytoplasmic; that stretch reads TLLKNTMKKNMPSRRK. The chain crosses the membrane as a helical span at residues 246-266; it reads AIGMIIVVTAAFLVSFMPYHI. Residues 267-291 are Extracellular-facing; that stretch reads QRTIHLHLLHSETRPCDSVLRMQKS. A helical membrane pass occupies residues 292–312; it reads VVITLSLAASNCCFDPLLYFF. The Cytoplasmic segment spans residues 313-352; the sequence is SGGNFRRRLSTFRKHSLSSMTYVPKKKASLPEKGEEICNE.

Belongs to the G-protein coupled receptor 1 family. As to expression, widely expressed, with higher expression in the lung and skin, intermediate levels in the heart, kidney and stomach and lower levels in several other tissues. Isoform 1 is the most abundant form in all tested tissues.

It is found in the cell membrane. Receptor for cysteinyl leukotrienes mediating constriction of the microvascular smooth muscle during an inflammatory response. This response is mediated via a G-protein that activates a phosphatidylinositol-calcium second messenger system. The rank order of affinities for the leukotrienes is LTD4 &gt;&gt; LTE4 = LTC4 &gt;&gt; LTB4. This Mus musculus (Mouse) protein is Cysteinyl leukotriene receptor 1 (Cysltr1).